Here is a 453-residue protein sequence, read N- to C-terminus: O-methyltransferase bik3 (453 aa).

The interval 1 to 25 is disordered; it reads MVSNGISNGTNGTNGTTTNGTNGVN. Residues 8–25 are compositionally biased toward low complexity; the sequence is NGTNGTNGTTTNGTNGVN. Residue aspartate 305 participates in S-adenosyl-L-methionine binding. The active-site Proton acceptor is the histidine 355.

The protein belongs to the class I-like SAM-binding methyltransferase superfamily. Cation-independent O-methyltransferase family. COMT subfamily.

It participates in secondary metabolite biosynthesis. Functionally, O-methyltransferase; part of the gene cluster that mediates the biosynthesis of bikaverin, a red pigment also considered as a mycotoxin. The first stage is catalyzed by the polyketide synthase bik1, which catalyzes the formation of the intermediate SMA76a also knowm as pre-bikaverin. FAD-dependent monooxygenase bik2 might then be responsible for the oxidation of pre-bikaverin to oxo-pre-bikaverin which is in turn methylated by the O-methyltransferase bik3 to me-oxo-pre-bikaverin. A further cycle of oxydation and methylation by bik2 and bik3 leads to the final product of bikaverin, via a nor-bikaverin intermediate. The chain is O-methyltransferase bik3 from Gibberella fujikuroi (strain CBS 195.34 / IMI 58289 / NRRL A-6831) (Bakanae and foot rot disease fungus).